A 323-amino-acid chain; its full sequence is DNA-directed RNA polymerase subunit alpha 1 (323 aa).

Positions Met-1–Arg-228 are alpha N-terminal domain (alpha-NTD). The interval Ile-244 to Lys-323 is alpha C-terminal domain (alpha-CTD).

It belongs to the RNA polymerase alpha chain family. As to quaternary structure, homodimer. The RNAP catalytic core consists of 2 alpha, 1 beta, 1 beta' and 1 omega subunit. When a sigma factor is associated with the core the holoenzyme is formed, which can initiate transcription.

The catalysed reaction is RNA(n) + a ribonucleoside 5'-triphosphate = RNA(n+1) + diphosphate. DNA-dependent RNA polymerase catalyzes the transcription of DNA into RNA using the four ribonucleoside triphosphates as substrates. The sequence is that of DNA-directed RNA polymerase subunit alpha 1 from Francisella tularensis subsp. novicida (strain U112).